Here is a 169-residue protein sequence, read N- to C-terminus: NADH-quinone oxidoreductase subunit B (169 aa).

The [4Fe-4S] cluster site is built by cysteine 42, cysteine 43, cysteine 107, and cysteine 136.

The protein belongs to the complex I 20 kDa subunit family. NDH-1 is composed of 14 different subunits. Subunits NuoB, C, D, E, F, and G constitute the peripheral sector of the complex. The cofactor is [4Fe-4S] cluster.

Its subcellular location is the cell inner membrane. It catalyses the reaction a quinone + NADH + 5 H(+)(in) = a quinol + NAD(+) + 4 H(+)(out). Its function is as follows. NDH-1 shuttles electrons from NADH, via FMN and iron-sulfur (Fe-S) centers, to quinones in the respiratory chain. The immediate electron acceptor for the enzyme in this species is believed to be ubiquinone. Couples the redox reaction to proton translocation (for every two electrons transferred, four hydrogen ions are translocated across the cytoplasmic membrane), and thus conserves the redox energy in a proton gradient. This Sulfurimonas denitrificans (strain ATCC 33889 / DSM 1251) (Thiomicrospira denitrificans (strain ATCC 33889 / DSM 1251)) protein is NADH-quinone oxidoreductase subunit B.